The sequence spans 477 residues: Bifunctional protein HldE (477 aa).

The interval 1-318 is ribokinase; it reads MKVTLPEFER…ENAVRGRAET (318 aa). Lys179 is modified (N6-acetyllysine). 195 to 198 lines the ATP pocket; the sequence is NLSE. Asp264 is a catalytic residue. The cytidylyltransferase stretch occupies residues 344–477; the sequence is MTNGVFDILH…IKKIQQDKKG (134 aa).

It in the N-terminal section; belongs to the carbohydrate kinase PfkB family. The protein in the C-terminal section; belongs to the cytidylyltransferase family. As to quaternary structure, homodimer.

It catalyses the reaction D-glycero-beta-D-manno-heptose 7-phosphate + ATP = D-glycero-beta-D-manno-heptose 1,7-bisphosphate + ADP + H(+). The catalysed reaction is D-glycero-beta-D-manno-heptose 1-phosphate + ATP + H(+) = ADP-D-glycero-beta-D-manno-heptose + diphosphate. It functions in the pathway nucleotide-sugar biosynthesis; ADP-L-glycero-beta-D-manno-heptose biosynthesis; ADP-L-glycero-beta-D-manno-heptose from D-glycero-beta-D-manno-heptose 7-phosphate: step 1/4. It participates in nucleotide-sugar biosynthesis; ADP-L-glycero-beta-D-manno-heptose biosynthesis; ADP-L-glycero-beta-D-manno-heptose from D-glycero-beta-D-manno-heptose 7-phosphate: step 3/4. In terms of biological role, catalyzes the phosphorylation of D-glycero-D-manno-heptose 7-phosphate at the C-1 position to selectively form D-glycero-beta-D-manno-heptose-1,7-bisphosphate. Its function is as follows. Catalyzes the ADP transfer from ATP to D-glycero-beta-D-manno-heptose 1-phosphate, yielding ADP-D-glycero-beta-D-manno-heptose. This Shigella dysenteriae serotype 1 (strain Sd197) protein is Bifunctional protein HldE.